A 1148-amino-acid chain; its full sequence is Trafficking protein particle complex subunit 9 (1148 aa).

2 positions are modified to phosphoserine: serine 566 and serine 953.

This sequence belongs to the NIBP family. As to quaternary structure, component of the multisubunit TRAPP (transport protein particle) complex, which includes at least TRAPPC2, TRAPPC2L, TRAPPC3, TRAPPC3L, TRAPPC4, TRAPPC5, TRAPPC8, TRAPPC9, TRAPPC10, TRAPPC11 and TRAPPC12. Directly interacts with IKBKB and MAP3K14. In terms of tissue distribution, expressed at high levels in muscle and kidney and to a lower extent in brain, heart and placenta.

The protein localises to the golgi apparatus. It is found in the cis-Golgi network. Its subcellular location is the endoplasmic reticulum. The protein resides in the cytoplasm. Its function is as follows. Functions as an activator of NF-kappa-B through increased phosphorylation of the IKK complex. May function in neuronal cells differentiation. May play a role in vesicular transport from endoplasmic reticulum to Golgi. The protein is Trafficking protein particle complex subunit 9 (TRAPPC9) of Homo sapiens (Human).